A 103-amino-acid polypeptide reads, in one-letter code: Small ribosomal subunit protein uS10 (103 aa).

It belongs to the universal ribosomal protein uS10 family. As to quaternary structure, part of the 30S ribosomal subunit.

In terms of biological role, involved in the binding of tRNA to the ribosomes. The polypeptide is Small ribosomal subunit protein uS10 (Aromatoleum aromaticum (strain DSM 19018 / LMG 30748 / EbN1) (Azoarcus sp. (strain EbN1))).